The primary structure comprises 660 residues: Bifunctional polymyxin resistance protein ArnA (660 aa).

The interval 1-304 is formyltransferase ArnAFT; sequence MKTVVFAYHD…MLGLVQGSRL (304 aa). 86-88 provides a ligand contact to (6R)-10-formyltetrahydrofolate; that stretch reads HLI. The active-site Proton donor; for formyltransferase activity is the histidine 104. Residues arginine 114 and 136–140 contribute to the (6R)-10-formyltetrahydrofolate site; that span reads VKRAD. The interval 314 to 660 is dehydrogenase ArnADH; sequence RRTRVLILGV…RTVDLTDKPS (347 aa). NAD(+) contacts are provided by residues aspartate 347 and 368-369; that span reads DI. Residues alanine 393, tyrosine 398, and 432–433 each bind UDP-alpha-D-glucuronate; that span reads TS. Catalysis depends on glutamate 434, which acts as the Proton acceptor; for decarboxylase activity. UDP-alpha-D-glucuronate contacts are provided by residues arginine 460, asparagine 492, 526 to 535, and tyrosine 613; that span reads KLIDGGKQKR. Residue arginine 619 is the Proton donor; for decarboxylase activity of the active site.

The protein in the N-terminal section; belongs to the Fmt family. UDP-L-Ara4N formyltransferase subfamily. This sequence in the C-terminal section; belongs to the NAD(P)-dependent epimerase/dehydratase family. UDP-glucuronic acid decarboxylase subfamily. Homohexamer, formed by a dimer of trimers.

The enzyme catalyses UDP-alpha-D-glucuronate + NAD(+) = UDP-beta-L-threo-pentopyranos-4-ulose + CO2 + NADH. It catalyses the reaction UDP-4-amino-4-deoxy-beta-L-arabinose + (6R)-10-formyltetrahydrofolate = UDP-4-deoxy-4-formamido-beta-L-arabinose + (6S)-5,6,7,8-tetrahydrofolate + H(+). It functions in the pathway nucleotide-sugar biosynthesis; UDP-4-deoxy-4-formamido-beta-L-arabinose biosynthesis; UDP-4-deoxy-4-formamido-beta-L-arabinose from UDP-alpha-D-glucuronate: step 1/3. Its pathway is nucleotide-sugar biosynthesis; UDP-4-deoxy-4-formamido-beta-L-arabinose biosynthesis; UDP-4-deoxy-4-formamido-beta-L-arabinose from UDP-alpha-D-glucuronate: step 3/3. The protein operates within bacterial outer membrane biogenesis; lipopolysaccharide biosynthesis. Bifunctional enzyme that catalyzes the oxidative decarboxylation of UDP-glucuronic acid (UDP-GlcUA) to UDP-4-keto-arabinose (UDP-Ara4O) and the addition of a formyl group to UDP-4-amino-4-deoxy-L-arabinose (UDP-L-Ara4N) to form UDP-L-4-formamido-arabinose (UDP-L-Ara4FN). The modified arabinose is attached to lipid A and is required for resistance to polymyxin and cationic antimicrobial peptides. The sequence is that of Bifunctional polymyxin resistance protein ArnA from Shigella flexneri.